We begin with the raw amino-acid sequence, 316 residues long: Zinc finger protein 367 (316 aa).

The interval 61–97 (VTLGPGSGSGAASPTRTSSSPAEADPLSCPEHLKDGI) is disordered. The segment covering 70-82 (GAASPTRTSSSPA) has biased composition (low complexity). 2 consecutive C2H2-type zinc fingers follow at residues 121–143 (IRCN…KRTH) and 149–173 (YLCD…QRLH). A disordered region spans residues 234–294 (QTREQRSPVP…GGVVTARRRL (61 aa)). A compositionally biased stretch (acidic residues) spans 255 to 278 (EDQEQQDPLDFLPSDEGEEEEQEE). Residues 289-313 (TARRRLQEQRERLHGALALIELANN) adopt a coiled-coil conformation.

The protein belongs to the krueppel C2H2-type zinc-finger protein family.

The protein localises to the nucleus. In terms of biological role, transcriptional activator. This Danio rerio (Zebrafish) protein is Zinc finger protein 367 (znf367).